The following is a 264-amino-acid chain: uncharacterized protein (264 aa).

Residues 1–21 (MMWNYFVTCIVLYANIISIHT) form the signal peptide. Residues 182–247 (QQPNAAQVPT…AANNGLDLTS (66 aa)) are disordered. Over residues 190–213 (PTTSQQQPTSNTGGQQPPTNASNP) the composition is skewed to low complexity. N-linked (GlcNAc...) asparagine glycosylation occurs at Asn209. A compositionally biased stretch (pro residues) spans 214–226 (PTNPQPTPTPAQP). The segment covering 230-247 (GTQVQQTPAANNGLDLTS) has biased composition (polar residues).

Component of the acid-insoluble and acid-soluble organic matrix of calcified layers of the shell (at protein level).

It localises to the secreted. This is an uncharacterized protein from Lottia gigantea (Giant owl limpet).